We begin with the raw amino-acid sequence, 273 residues long: Nucleotide-binding protein TTHA0319 (273 aa).

8-15 (GLSGAGKT) is a binding site for ATP. 57–60 (DARA) lines the GTP pocket.

The protein belongs to the RapZ-like family.

Functionally, displays ATPase and GTPase activities. In Thermus thermophilus (strain ATCC 27634 / DSM 579 / HB8), this protein is Nucleotide-binding protein TTHA0319.